A 483-amino-acid polypeptide reads, in one-letter code: Protein disulfide-isomerase 5-3 (483 aa).

3 N-linked (GlcNAc...) asparagine glycosylation sites follow: Asn53, Asn74, and Asn99. The Thioredoxin domain maps to 133-263 (EETKEEFPDG…IVKMVEGLVA (131 aa)). Cys170 acts as the Nucleophile in catalysis. 3 N-linked (GlcNAc...) asparagine glycosylation sites follow: Asn279, Asn326, and Asn376. Residues 442–462 (FSHFITNLCAIIGGVFTVAGI) traverse the membrane as a helical segment.

The protein belongs to the protein disulfide isomerase family. As to expression, widely expressed.

It localises to the membrane. Functionally, acts as a protein-folding catalyst that interacts with nascent polypeptides to catalyze the formation, isomerization, and reduction or oxidation of disulfide bonds. This chain is Protein disulfide-isomerase 5-3 (PDIL5-3), found in Arabidopsis thaliana (Mouse-ear cress).